The primary structure comprises 116 residues: Protein Wnt-5b (116 aa).

S1 carries the O-palmitoleoyl serine; by PORCN lipid modification. N69 and N83 each carry an N-linked (GlcNAc...) asparagine glycan. Residues C82 and C97 are joined by a disulfide bond.

Belongs to the Wnt family. In terms of processing, palmitoleoylation is required for efficient binding to frizzled receptors. Depalmitoleoylation leads to Wnt signaling pathway inhibition.

It is found in the secreted. The protein localises to the extracellular space. It localises to the extracellular matrix. In terms of biological role, ligand for members of the frizzled family of seven transmembrane receptors. Probable developmental protein. May be a signaling molecule which affects the development of discrete regions of tissues. Is likely to signal over only few cell diameters. This chain is Protein Wnt-5b (WNT-5B), found in Plethodon jordani (Red-cheeked salamander).